A 551-amino-acid polypeptide reads, in one-letter code: Glucans biosynthesis protein D (551 aa).

A signal peptide (tat-type signal) is located at residues 1-32 (MNRRRFLQGSLAMAALSGTTGLSTLFSRAAFA).

It belongs to the OpgD/OpgG family. Predicted to be exported by the Tat system. The position of the signal peptide cleavage has not been experimentally proven.

It is found in the periplasm. It participates in glycan metabolism; osmoregulated periplasmic glucan (OPG) biosynthesis. Probably involved in the control of the structural glucose backbone of osmoregulated periplasmic glucans (OPGs). This chain is Glucans biosynthesis protein D, found in Enterobacter sp. (strain 638).